A 201-amino-acid chain; its full sequence is MSNESNNTSQDQVEEAVTPEIVVDEASLMDELTQANFRIEELEQLLAESETALAERKDVEMRAAAETQNIRTRAAKDVEQARKFALEKFANELLPVIDNMERALQGTNPEDEATKAIYEGVELTMKGFLTSVEKFGVTQVNPQGQAFNPEHHQAIGMQPSAEYPANTVMMVMQKGYLLNDRLLRPAMVMVSQGGGSVDVEA.

Belongs to the GrpE family. In terms of assembly, homodimer.

The protein localises to the cytoplasm. In terms of biological role, participates actively in the response to hyperosmotic and heat shock by preventing the aggregation of stress-denatured proteins, in association with DnaK and GrpE. It is the nucleotide exchange factor for DnaK and may function as a thermosensor. Unfolded proteins bind initially to DnaJ; upon interaction with the DnaJ-bound protein, DnaK hydrolyzes its bound ATP, resulting in the formation of a stable complex. GrpE releases ADP from DnaK; ATP binding to DnaK triggers the release of the substrate protein, thus completing the reaction cycle. Several rounds of ATP-dependent interactions between DnaJ, DnaK and GrpE are required for fully efficient folding. In Shewanella frigidimarina (strain NCIMB 400), this protein is Protein GrpE.